A 471-amino-acid chain; its full sequence is UDP-N-acetylmuramoylalanine--D-glutamate ligase (471 aa).

An ATP-binding site is contributed by 135-141 (GTNGKTT).

This sequence belongs to the MurCDEF family.

The protein resides in the cytoplasm. The catalysed reaction is UDP-N-acetyl-alpha-D-muramoyl-L-alanine + D-glutamate + ATP = UDP-N-acetyl-alpha-D-muramoyl-L-alanyl-D-glutamate + ADP + phosphate + H(+). It functions in the pathway cell wall biogenesis; peptidoglycan biosynthesis. Functionally, cell wall formation. Catalyzes the addition of glutamate to the nucleotide precursor UDP-N-acetylmuramoyl-L-alanine (UMA). This is UDP-N-acetylmuramoylalanine--D-glutamate ligase from Frankia casuarinae (strain DSM 45818 / CECT 9043 / HFP020203 / CcI3).